A 433-amino-acid polypeptide reads, in one-letter code: Phosphomethylpyrimidine synthase (433 aa).

Residues Asn69, Met98, Tyr127, His163, 185–187 (SRG), 226–229 (DACR), and Glu265 each bind substrate. His269 is a Zn(2+) binding site. Substrate is bound at residue Tyr292. Position 333 (His333) interacts with Zn(2+). Residues Cys409, Cys412, and Cys416 each contribute to the [4Fe-4S] cluster site.

The protein belongs to the ThiC family. [4Fe-4S] cluster serves as cofactor.

The enzyme catalyses 5-amino-1-(5-phospho-beta-D-ribosyl)imidazole + S-adenosyl-L-methionine = 4-amino-2-methyl-5-(phosphooxymethyl)pyrimidine + CO + 5'-deoxyadenosine + formate + L-methionine + 3 H(+). Its pathway is cofactor biosynthesis; thiamine diphosphate biosynthesis. In terms of biological role, catalyzes the synthesis of the hydroxymethylpyrimidine phosphate (HMP-P) moiety of thiamine from aminoimidazole ribotide (AIR) in a radical S-adenosyl-L-methionine (SAM)-dependent reaction. The chain is Phosphomethylpyrimidine synthase from Clostridioides difficile (strain 630) (Peptoclostridium difficile).